The primary structure comprises 144 residues: Transcriptional regulator SlyA (144 aa).

Residues 2 to 135 (ESPLGSDLAR…LIKLIAKLEH (134 aa)) enclose the HTH marR-type domain. The segment at residues 49–72 (QIQLAKAIGIEQPSLVRTLDQLEE) is a DNA-binding region (H-T-H motif).

Belongs to the SlyA family. As to quaternary structure, homodimer.

Its function is as follows. Transcription regulator that can specifically activate or repress expression of target genes. In Escherichia coli O127:H6 (strain E2348/69 / EPEC), this protein is Transcriptional regulator SlyA.